A 492-amino-acid polypeptide reads, in one-letter code: MTLRVTNTLTGEKEPFEPRDPDSVLLYYCGLTTSDPPHLGHARGWVHVDVMARWLDYLGYDVHHVENLTDVNEKIVARVGEDGDSEADVARHYVQQAIDDMRSLNLGRAEVYPRVSEHVPEIIDLVERLIEQGHAYEQNGSVYFDVTSFEDYGKLSNQSVDDIESQGADTEGEKRHPADFALWKAGGVDPADIAEHQHPEAAPAEEACQTAQIWDSPWGEGRPGWHIECSAMSMTHLDESIDIHVGGQDLVFPHHENEVAQSEAATGKQFANYWLHVRLLETEEEKMSSSLGNYFTVADAVEEFGPDVLRTFLLSTAYTSRATYSDETIAEAKERWDRLSRGYERAVEACDDVDAHTKVTDETLRDAVEDARSAFEAALNDDFNTREAMTALLDLTAAVNTHVDGHDEYDYQGLRRAVETFEEFGGGILGLAFGDDDSGDVSLAGDVVDLVLTVRQQEREAGNYERADELRDELEALGVEVQDTDDGPTYRL.

Cys-29 serves as a coordination point for Zn(2+). Positions 31 to 41 match the 'HIGH' region motif; it reads LTTSDPPHLGH. Zn(2+) is bound by residues Cys-229, His-254, and Glu-258. The 'KMSKS' region signature appears at 286–290; that stretch reads KMSSS.

Belongs to the class-I aminoacyl-tRNA synthetase family. Zn(2+) serves as cofactor.

It localises to the cytoplasm. It carries out the reaction tRNA(Cys) + L-cysteine + ATP = L-cysteinyl-tRNA(Cys) + AMP + diphosphate. The chain is Cysteine--tRNA ligase from Haloarcula marismortui (strain ATCC 43049 / DSM 3752 / JCM 8966 / VKM B-1809) (Halobacterium marismortui).